The following is a 201-amino-acid chain: Phospholipase D (201 aa).

The signal sequence occupies residues 1–25 (MKRKNKKFTEIFIAFILGIAIGVLG). The PLD phosphodiesterase domain occupies 142 to 169 (VPGIAHNKVIIIDKKKVITGSFNFTAAA). Catalysis depends on residues His-147, Lys-149, and Asp-154.

Belongs to the phospholipase D family. As to quaternary structure, homodimer.

It is found in the secreted. The enzyme catalyses a 1,2-diacyl-sn-glycero-3-phosphocholine + H2O = a 1,2-diacyl-sn-glycero-3-phosphate + choline + H(+). Its function is as follows. Could be a virulence factor. In Rickettsia bellii (strain RML369-C), this protein is Phospholipase D (pld).